The sequence spans 305 residues: tRNA dimethylallyltransferase 1 (305 aa).

An ATP-binding site is contributed by glycine 10 to serine 17. Threonine 12–serine 17 provides a ligand contact to substrate. Residues aspartate 35–threonine 38 form an interaction with substrate tRNA region.

It belongs to the IPP transferase family. In terms of assembly, monomer. Mg(2+) serves as cofactor.

It carries out the reaction adenosine(37) in tRNA + dimethylallyl diphosphate = N(6)-dimethylallyladenosine(37) in tRNA + diphosphate. Its function is as follows. Catalyzes the transfer of a dimethylallyl group onto the adenine at position 37 in tRNAs that read codons beginning with uridine, leading to the formation of N6-(dimethylallyl)adenosine (i(6)A). The sequence is that of tRNA dimethylallyltransferase 1 from Trichlorobacter lovleyi (strain ATCC BAA-1151 / DSM 17278 / SZ) (Geobacter lovleyi).